The primary structure comprises 114 residues: Adapter SH3BGRL (114 aa).

Residues 13–50 (SMAIKKKQQDVLGFLEANKIGFEEKDIAANEENRKWMR) are required for interaction with HER2. Residues 54-71 (PENSRPATGYPLPPQIFN) form a required for interaction with PFN1, HER2, and ATG12 region. Residues 61 to 67 (TGYPLPP) carry the SH3-binding motif.

This sequence belongs to the SH3BGR family. Monomer. Interacts with PFN1/Profilin-1. Interacts with ERBB2. Interacts with ATG12. Interacts with BECN1. Interacts with translating ribosomes.

Its subcellular location is the cytoplasm. It localises to the cytosol. The protein resides in the cell membrane. Functionally, appears to function as an adapter protein that bridges proteins together or proteins with mRNAs. May function as a ubiquitin ligase-substrate adapter. Additionally, associates with translating cytoplasmic ribosomes and may promote the expression of specific mRNAs. This is Adapter SH3BGRL (SH3BGRL) from Bos taurus (Bovine).